We begin with the raw amino-acid sequence, 1250 residues long: DNA repair protein REV1 (1250 aa).

Positions 44–131 (TSSTIFSGVA…RLLSYIPYQL (88 aa)) constitute a BRCT domain. 2 disordered regions span residues 204 to 236 (EQTS…NGAL) and 252 to 329 (RLSP…TSSV). Over residues 260 to 273 (EEDKAEKSSTDFRD) the composition is skewed to basic and acidic residues. Polar residues predominate over residues 275–320 (TLQQLQQSTRNTDALRNPHRTNSFSLSPLHSNTKINGAHHSTVQGP). The segment at 352–362 (FYSHSRLHHIS) is interaction with target DNA. DCTP-binding positions include Arg-357, 423-427 (DMDCF), 509-515 (SCSYEAR), Asn-521, and Asp-569. The UmuC domain occupies 419–652 (IMHVDMDCFF…QLVTNLPGVG (234 aa)). Residue Asp-423 coordinates Mg(2+). 2 residues coordinate Mg(2+): Asp-569 and Glu-570. 2 interaction with target DNA regions span residues 652–655 (GHSM) and 708–716 (RKSVSAEIN). Residues 1034 to 1045 (AYDQRQRQDENS) show a composition bias toward basic and acidic residues. Disordered regions lie at residues 1034 to 1101 (AYDQ…AKTL) and 1117 to 1146 (KHEG…LQSD). The span at 1046 to 1055 (THQQSASASV) shows a compositional bias: polar residues. Positions 1069–1078 (EKKRNKKKKT) are enriched in basic residues. A Nuclear localization signal motif is present at residues 1071 to 1077 (KRNKKKK). The span at 1117–1128 (KHEGPPAEKPLE) shows a compositional bias: basic and acidic residues. A compositionally biased stretch (polar residues) spans 1131-1145 (SASTSGVPGLSSLQS). The segment at 1151 to 1250 (VRPPAPNLAG…QTYGSTLKVT (100 aa)) is protein interaction domain; mediates interaction with DNA polymerase zeta.

The protein belongs to the DNA polymerase type-Y family. In terms of assembly, monomer. Interacts with the DNA polymerase zeta which is composed of REV3L and MAD2L2; the interaction with MAD2L2 is direct and requires that REV3L is in its closed conformation. Interacts with POLH, POLI and POLK. Interacts with FAAP20.

It is found in the nucleus. Its function is as follows. Deoxycytidyl transferase involved in DNA repair. Transfers a dCMP residue from dCTP to the 3'-end of a DNA primer in a template-dependent reaction. May assist in the first step in the bypass of abasic lesions by the insertion of a nucleotide opposite the lesion. Required for normal induction of mutations by physical and chemical agents. In Pongo abelii (Sumatran orangutan), this protein is DNA repair protein REV1 (REV1).